The chain runs to 328 residues: WUSCHEL-related homeobox 6 (328 aa).

Residues Met-1–Gln-11 show a composition bias toward polar residues. Residues Met-1–Pro-45 form a disordered region. Positions Gly-23–Ser-33 are enriched in gly residues. Positions Pro-38–Gln-102 form a DNA-binding region, homeobox; WUS-type.

Belongs to the WUS homeobox family.

Its subcellular location is the nucleus. In terms of biological role, transcription factor which may be involved in developmental processes. The sequence is that of WUSCHEL-related homeobox 6 (WOX6) from Oryza sativa subsp. indica (Rice).